The following is a 61-amino-acid chain: MLQISNLLLVADVSAQAANNSAVGMIGSFIAAALLIVIPATAFLIFVSQNDSLERTSTGRR.

A helical transmembrane segment spans residues 26 to 46 (IGSFIAAALLIVIPATAFLIF).

It belongs to the PsbX family. Type 2 subfamily. PSII consists of a core antenna complex that captures photons, and an electron transfer chain that converts photonic excitation into a charge separation. PSII forms dimeric complexes.

It localises to the cellular thylakoid membrane. Involved in the binding and/or turnover of quinones at the Q(B) site of Photosystem II. In Prochlorococcus marinus (strain MIT 9215), this protein is Photosystem II reaction center X protein.